The primary structure comprises 443 residues: 23S rRNA (uracil(1939)-C(5))-methyltransferase RlmD (443 aa).

The TRAM domain maps to 12–70 (AKKLSQKIALKVQRLDHLGAGIAEHQGKVVFIPGALPGETVEVQLTEQKKNYARAKLQR). Residues Cys83, Cys89, Cys92, and Cys171 each contribute to the [4Fe-4S] cluster site. 6 residues coordinate S-adenosyl-L-methionine: Gln276, Phe305, Asn310, Glu326, Asp353, and Asp373. Cys399 functions as the Nucleophile in the catalytic mechanism.

Belongs to the class I-like SAM-binding methyltransferase superfamily. RNA M5U methyltransferase family. RlmD subfamily.

It catalyses the reaction uridine(1939) in 23S rRNA + S-adenosyl-L-methionine = 5-methyluridine(1939) in 23S rRNA + S-adenosyl-L-homocysteine + H(+). Functionally, catalyzes the formation of 5-methyl-uridine at position 1939 (m5U1939) in 23S rRNA. The protein is 23S rRNA (uracil(1939)-C(5))-methyltransferase RlmD of Shewanella amazonensis (strain ATCC BAA-1098 / SB2B).